We begin with the raw amino-acid sequence, 329 residues long: Ketol-acid reductoisomerase (NADP(+)) (329 aa).

Residues 2 to 182 (VEIYYDDDAS…GGTRAGALRT (181 aa)) form the KARI N-terminal Rossmann domain. Residues 25–28 (YGSQ), Ser51, and Ser53 each bind NADP(+). Residue His108 is part of the active site. Gly134 contributes to the NADP(+) binding site. The KARI C-terminal knotted domain occupies 183 to 328 (TFTEETETDL…AKLRPMMSWI (146 aa)). Asp191, Glu195, Glu227, and Glu231 together coordinate Mg(2+). Ser252 lines the substrate pocket.

Belongs to the ketol-acid reductoisomerase family. It depends on Mg(2+) as a cofactor.

The enzyme catalyses (2R)-2,3-dihydroxy-3-methylbutanoate + NADP(+) = (2S)-2-acetolactate + NADPH + H(+). It catalyses the reaction (2R,3R)-2,3-dihydroxy-3-methylpentanoate + NADP(+) = (S)-2-ethyl-2-hydroxy-3-oxobutanoate + NADPH + H(+). The protein operates within amino-acid biosynthesis; L-isoleucine biosynthesis; L-isoleucine from 2-oxobutanoate: step 2/4. It functions in the pathway amino-acid biosynthesis; L-valine biosynthesis; L-valine from pyruvate: step 2/4. Involved in the biosynthesis of branched-chain amino acids (BCAA). Catalyzes an alkyl-migration followed by a ketol-acid reduction of (S)-2-acetolactate (S2AL) to yield (R)-2,3-dihydroxy-isovalerate. In the isomerase reaction, S2AL is rearranged via a Mg-dependent methyl migration to produce 3-hydroxy-3-methyl-2-ketobutyrate (HMKB). In the reductase reaction, this 2-ketoacid undergoes a metal-dependent reduction by NADPH to yield (R)-2,3-dihydroxy-isovalerate. This Frankia casuarinae (strain DSM 45818 / CECT 9043 / HFP020203 / CcI3) protein is Ketol-acid reductoisomerase (NADP(+)).